Reading from the N-terminus, the 102-residue chain is uncharacterized protein (102 aa).

The signal sequence occupies residues 1–41 (MLFLDSYSLLIQFQRFKNWESPRRFSSSFPLLLFVFKPIFA).

This is an uncharacterized protein from Saccharomyces cerevisiae (strain ATCC 204508 / S288c) (Baker's yeast).